The chain runs to 90 residues: Small ribosomal subunit protein uS15c (90 aa).

The protein belongs to the universal ribosomal protein uS15 family. In terms of assembly, part of the 30S ribosomal subunit.

It is found in the plastid. The protein resides in the chloroplast. The polypeptide is Small ribosomal subunit protein uS15c (rps15) (Secale cereale (Rye)).